We begin with the raw amino-acid sequence, 720 residues long: Iron-sulfur clusters transporter ATM1, mitochondrial (720 aa).

Residues M1–Y36 constitute a mitochondrion transit peptide. The Mitochondrial matrix segment spans residues I37 to R129. Residues R64–N77 show a composition bias toward polar residues. The segment at R64 to T102 is disordered. The chain crosses the membrane as a helical span at residues V130 to F151. An ABC transmembrane type-1 domain is found at V130 to Q421. Over K152–T175 the chain is Mitochondrial intermembrane. A helical transmembrane segment spans residues M176–F199. The Mitochondrial matrix portion of the chain corresponds to A200–V248. Residues L249 to Y272 traverse the membrane as a helical segment. Q273 is a topological domain (mitochondrial intermembrane). Residues F274–F294 traverse the membrane as a helical segment. At K295–A360 the chain is on the mitochondrial matrix side. Glutathione contacts are provided by residues R300 to R304 and N363 to Q366. A helical membrane pass occupies residues F361–Y379. The Mitochondrial intermembrane segment spans residues M380 to D394. The helical transmembrane segment at L395 to Y416 threads the bilayer. Position 413 (G413) interacts with glutathione. At R417 to D720 the chain is on the mitochondrial matrix side. The 237-residue stretch at I456–N692 folds into the ABC transporter domain. ATP contacts are provided by residues Y465 and G489–R500.

Belongs to the ABC transporter superfamily. ABCB family. Heavy Metal importer (TC 3.A.1.210) subfamily. Homodimer.

It localises to the mitochondrion inner membrane. In terms of biological role, performs an essential function in the generation of cytoplasmic iron-sulfur proteins by mediating the ATP-dependent export of Fe/S cluster precursors synthesized by NFS1 and other mitochondrial proteins. Hydrolyzes ATP. Binds glutathione and may function by transporting a glutathione-conjugated iron-sulfur compound. This is Iron-sulfur clusters transporter ATM1, mitochondrial from Kluyveromyces lactis (strain ATCC 8585 / CBS 2359 / DSM 70799 / NBRC 1267 / NRRL Y-1140 / WM37) (Yeast).